The sequence spans 125 residues: Small ribosomal subunit protein uS12m (125 aa).

This sequence belongs to the universal ribosomal protein uS12 family.

Its subcellular location is the mitochondrion. Protein S12 is involved in the translation initiation step. The polypeptide is Small ribosomal subunit protein uS12m (RPS12) (Helianthus annuus (Common sunflower)).